A 636-amino-acid polypeptide reads, in one-letter code: Chaperone protein DnaK (636 aa).

Threonine 203 bears the Phosphothreonine; by autocatalysis mark. Positions 602 to 636 (VYGKQQEGAPAQEEPSAEGKKADDEGTVEGEFREV) are disordered. Residues 618-636 (AEGKKADDEGTVEGEFREV) are compositionally biased toward basic and acidic residues.

The protein belongs to the heat shock protein 70 family.

In terms of biological role, acts as a chaperone. This Dehalococcoides mccartyi (strain ATCC BAA-2100 / JCM 16839 / KCTC 5957 / BAV1) protein is Chaperone protein DnaK.